Consider the following 263-residue polypeptide: Hydroxyethylthiazole kinase 1 (263 aa).

Position 42 (M42) interacts with substrate. The ATP site is built by K118 and T164. Residue G191 coordinates substrate.

It belongs to the Thz kinase family. Mg(2+) is required as a cofactor.

The enzyme catalyses 5-(2-hydroxyethyl)-4-methylthiazole + ATP = 4-methyl-5-(2-phosphooxyethyl)-thiazole + ADP + H(+). It participates in cofactor biosynthesis; thiamine diphosphate biosynthesis; 4-methyl-5-(2-phosphoethyl)-thiazole from 5-(2-hydroxyethyl)-4-methylthiazole: step 1/1. In terms of biological role, catalyzes the phosphorylation of the hydroxyl group of 4-methyl-5-beta-hydroxyethylthiazole (THZ). The protein is Hydroxyethylthiazole kinase 1 of Clostridium botulinum (strain Okra / Type B1).